Reading from the N-terminus, the 267-residue chain is MTLGRRLACLFLACVLPALLLGGTALASEIVGGRRARPHAWPFMVSLQLRGGHFCGATLIAPNFVMSAAHCVANVNVRAVRVVLGAHNLSRREPTRQVFAVQRIFENGYDPVNLLNDIVILQLNGSATINANVQVAQLPAQGRRLGNGVQCLAMGWGLLGRNRGIASVLQELNVTVVTSLCRRSNVCTLVRGRQAGVCFGDSGSPLVCNGLIHGIASFVRGGCASGLYPDAFAPVAQFVNWIDSIIQRSEDNPCPHPRDPDPASRTH.

The first 27 residues, 1–27 (MTLGRRLACLFLACVLPALLLGGTALA), serve as a signal peptide directing secretion. The propeptide occupies 28-29 (SE). The Peptidase S1 domain maps to 30–247 (IVGGRRARPH…FVNWIDSIIQ (218 aa)). Cys55 and Cys71 form a disulfide bridge. The Charge relay system role is filled by His70. A glycan (N-linked (GlcNAc...) asparagine) is linked at Asn88. Asp117 functions as the Charge relay system in the catalytic mechanism. N-linked (GlcNAc...) asparagine glycans are attached at residues Asn124 and Asn173. Intrachain disulfides connect Cys151/Cys208, Cys181/Cys187, and Cys198/Cys223. Ser202 acts as the Charge relay system in catalysis.

It belongs to the peptidase S1 family. Elastase subfamily. As to quaternary structure, interacts with NOTCH2NL. Interacts with agaphelin, an antihemostatic protein from Anopheles gambiae. In terms of tissue distribution, bone marrow cells. Neutrophil.

It localises to the cytoplasmic vesicle. The protein resides in the phagosome. It carries out the reaction Hydrolysis of proteins, including elastin. Preferential cleavage: Val-|-Xaa &gt; Ala-|-Xaa.. Functionally, serine protease that modifies the functions of natural killer cells, monocytes and granulocytes. Inhibits C5a-dependent neutrophil enzyme release and chemotaxis. Promotes cleavage of GSDMB, thereby inhibiting pyroptosis. Promotes blood coagulation. Through the activation of the platelet fibrinogen receptor integrin alpha-IIb/beta-3, potentiates platelet aggregation induced by a threshold concentration of cathepsin G (CTSG). Cleaves and thus inactivates tissue factor pathway inhibitor (TFPI). Capable of killing E.coli but not S.aureus in vitro; digests outer membrane protein A (ompA) in E.coli and K.pneumoniae. This chain is Neutrophil elastase (ELANE), found in Homo sapiens (Human).